We begin with the raw amino-acid sequence, 635 residues long: Bifunctional lysine-specific demethylase and histidyl-hydroxylase NO66 (635 aa).

2 disordered regions span residues 1–115 (MSAV…LQNS) and 141–190 (FNGE…KANG). Residues 84-99 (ASASDINTSASKNVNA) are compositionally biased toward low complexity. Polar residues predominate over residues 141-156 (FNGESLKNNSNHSTPV). The JmjC domain occupies 295 to 440 (CSIRMLNPQT…DLLELFFPHA (146 aa)). Fe cation is bound by residues histidine 341, aspartate 343, and histidine 406.

It belongs to the ROX family. NO66 subfamily. It depends on Fe(2+) as a cofactor.

Its subcellular location is the nucleus. It catalyses the reaction N(6),N(6)-dimethyl-L-lysyl(36)-[histone H3] + 2 2-oxoglutarate + 2 O2 = L-lysyl(36)-[histone H3] + 2 formaldehyde + 2 succinate + 2 CO2. Its function is as follows. Oxygenase that can act as both a histone lysine demethylase and a ribosomal histidine hydroxylase. Specifically demethylates 'Lys-4' (H3K4me) and 'Lys-36' (H3K36me) of histone H3, thereby playing a central role in histone code. The chain is Bifunctional lysine-specific demethylase and histidyl-hydroxylase NO66 from Aedes aegypti (Yellowfever mosquito).